A 148-amino-acid chain; its full sequence is Large ribosomal subunit protein uL15 (148 aa).

Over residues 1 to 30 (MPSRLRKTRKLRGHVSHGHGRIGKHRKHPG) the composition is skewed to basic residues. Positions 1 to 37 (MPSRLRKTRKLRGHVSHGHGRIGKHRKHPGGRGNAGG) are disordered. At histidine 39 the chain carries (3S)-3-hydroxyhistidine. N6-acetyllysine occurs at positions 47 and 55. Serine 68 carries the post-translational modification Phosphoserine. Position 110 is an N6-acetyllysine (lysine 110).

Belongs to the universal ribosomal protein uL15 family. Component of the large ribosomal subunit. Hydroxylated on His-39 by MINA.

The protein localises to the cytoplasm. Its function is as follows. Component of the large ribosomal subunit. The ribosome is a large ribonucleoprotein complex responsible for the synthesis of proteins in the cell. This chain is Large ribosomal subunit protein uL15 (RPL27A), found in Bos taurus (Bovine).